We begin with the raw amino-acid sequence, 73 residues long: Putative membrane protein insertion efficiency factor (73 aa).

This sequence belongs to the UPF0161 family.

Its subcellular location is the cell inner membrane. In terms of biological role, could be involved in insertion of integral membrane proteins into the membrane. The polypeptide is Putative membrane protein insertion efficiency factor (Phocaeicola vulgatus (strain ATCC 8482 / DSM 1447 / JCM 5826 / CCUG 4940 / NBRC 14291 / NCTC 11154) (Bacteroides vulgatus)).